Reading from the N-terminus, the 880-residue chain is Leucine--tRNA ligase (880 aa).

The 'HIGH' region signature appears at 46–56; sequence PYPSGALHMGH. The short motif at 638–642 is the 'KMSKS' region element; it reads KMSKS. K641 is a binding site for ATP.

Belongs to the class-I aminoacyl-tRNA synthetase family.

The protein localises to the cytoplasm. It carries out the reaction tRNA(Leu) + L-leucine + ATP = L-leucyl-tRNA(Leu) + AMP + diphosphate. This is Leucine--tRNA ligase from Xanthomonas euvesicatoria pv. vesicatoria (strain 85-10) (Xanthomonas campestris pv. vesicatoria).